We begin with the raw amino-acid sequence, 106 residues long: Small ribosomal subunit protein uS10 (106 aa).

The protein belongs to the universal ribosomal protein uS10 family. In terms of assembly, part of the 30S ribosomal subunit.

Involved in the binding of tRNA to the ribosomes. The polypeptide is Small ribosomal subunit protein uS10 (Prochlorococcus marinus subsp. pastoris (strain CCMP1986 / NIES-2087 / MED4)).